Consider the following 329-residue polypeptide: Neuropeptides B/W receptor type 1 (329 aa).

Over 1-43 the chain is Extracellular; that stretch reads MHNLTLFESGGDNVSCGGSSLGCPNGSSLAPLPLPQPLAVAVP. N-linked (GlcNAc...) asparagine glycosylation is found at Asn-3, Asn-13, and Asn-25. A helical membrane pass occupies residues 44-64; sequence VVYGVICAVGLAGNSAVLYVL. At 65-75 the chain is on the cytoplasmic side; the sequence is LRTPRMKTVTN. Residues 76 to 96 traverse the membrane as a helical segment; that stretch reads VFILNLAIADELFTLVLPINI. Residues 97-112 lie on the Extracellular side of the membrane; it reads ADFLLRRWPFGEVMCK. A disulfide bond links Cys-111 and Cys-190. The helical transmembrane segment at 113 to 133 threads the bilayer; that stretch reads LIVAVDQYNTFSSLYFLAVMS. Residues 134-158 are Cytoplasmic-facing; the sequence is ADRYLVVLATAESRRVSGRTYGAAR. The helical transmembrane segment at 159-179 threads the bilayer; sequence AVSLAVWALVTLVVLPFAVFA. Topologically, residues 180 to 209 are extracellular; it reads RLDEEQGRRQCVLVFPQPEAFWWRASRLYT. The chain crosses the membrane as a helical span at residues 210-230; sequence LVLGFAIPVTTICALYTTLLC. At 231 to 250 the chain is on the cytoplasmic side; it reads RLRAIQLDSHAKALDRAKKR. A helical membrane pass occupies residues 251 to 271; it reads VTLLVAAILAVCLLCWTPYHL. The Extracellular segment spans residues 272-289; the sequence is STIVALTTDLPQTPLVIG. The chain crosses the membrane as a helical span at residues 290–312; sequence ISYFITSLSYANSCLNPFLYAFL. Residues 313 to 329 are Cytoplasmic-facing; that stretch reads DDSFRRSLRQLVSCRSA.

This sequence belongs to the G-protein coupled receptor 1 family.

The protein resides in the cell membrane. In terms of biological role, interacts specifically with a number of opioid ligands. Receptor for neuropeptides B and W, which may be involved in neuroendocrine system regulation, food intake and the organization of other signals. This Mus musculus (Mouse) protein is Neuropeptides B/W receptor type 1 (Npbwr1).